The chain runs to 40 residues: Photosystem II reaction center protein Y (40 aa).

The chain crosses the membrane as a helical span at residues Leu5–Ile23.

This sequence belongs to the PsbY family. PSII is composed of 1 copy each of membrane proteins PsbA, PsbB, PsbC, PsbD, PsbE, PsbF, PsbH, PsbI, PsbJ, PsbK, PsbL, PsbM, PsbT, PsbX, PsbY, PsbZ, Psb30/Ycf12, peripheral proteins PsbO, CyanoQ (PsbQ), PsbU, PsbV and a large number of cofactors. It forms dimeric complexes.

Its subcellular location is the cellular thylakoid membrane. In terms of biological role, loosely associated component of the core of photosystem II (PSII), it is not always seen in crystals. PSII is a light-driven water plastoquinone oxidoreductase, using light energy to abstract electrons from H(2)O, generating a proton gradient subsequently used for ATP formation. The sequence is that of Photosystem II reaction center protein Y from Synechococcus sp. (strain RCC307).